The sequence spans 914 residues: DNA mismatch repair protein MutS (914 aa).

The disordered stretch occupies residues 1–25 (MDKKNDHKNNLIPQPASSFASSQER). Polar residues predominate over residues 11-25 (LIPQPASSFASSQER). 662–669 (GPNMGGKS) lines the ATP pocket.

It belongs to the DNA mismatch repair MutS family.

Functionally, this protein is involved in the repair of mismatches in DNA. It is possible that it carries out the mismatch recognition step. This protein has a weak ATPase activity. In Bartonella tribocorum (strain CIP 105476 / IBS 506), this protein is DNA mismatch repair protein MutS.